Reading from the N-terminus, the 332-residue chain is Arrestin domain-containing protein 5 (332 aa).

Residues 311-332 (SNQTAAGCRTRAPLPVSPDQQN) are disordered.

Belongs to the arrestin family.

It localises to the membrane. Plays an essential role in spermatogenesis. May be involved in the anchoring of the sperm head to the tail during spermatogenesis by affecting SEC22A-mediated SUN5 and NDC1 transport and localization. The chain is Arrestin domain-containing protein 5 (ARRDC5) from Bos taurus (Bovine).